The following is a 380-amino-acid chain: Cytochrome b (380 aa).

4 helical membrane passes run 34–54 (FGSL…LLAM), 78–99 (WLIR…YLHI), 114–134 (WNIG…GYVL), and 179–199 (FFAL…VHLT). Heme b contacts are provided by His84 and His98. 2 residues coordinate heme b: His183 and His197. A ubiquinone is bound at residue His202. 4 consecutive transmembrane segments (helical) span residues 227-247 (IKDM…ALFS), 289-309 (LGGV…PLLH), 321-341 (LLPF…WVGS), and 348-368 (FIII…VLFP).

It belongs to the cytochrome b family. As to quaternary structure, the cytochrome bc1 complex contains 11 subunits: 3 respiratory subunits (MT-CYB, CYC1 and UQCRFS1), 2 core proteins (UQCRC1 and UQCRC2) and 6 low-molecular weight proteins (UQCRH/QCR6, UQCRB/QCR7, UQCRQ/QCR8, UQCR10/QCR9, UQCR11/QCR10 and a cleavage product of UQCRFS1). This cytochrome bc1 complex then forms a dimer. Heme b serves as cofactor.

It localises to the mitochondrion inner membrane. In terms of biological role, component of the ubiquinol-cytochrome c reductase complex (complex III or cytochrome b-c1 complex) that is part of the mitochondrial respiratory chain. The b-c1 complex mediates electron transfer from ubiquinol to cytochrome c. Contributes to the generation of a proton gradient across the mitochondrial membrane that is then used for ATP synthesis. The sequence is that of Cytochrome b (MT-CYB) from Gymnorhina tibicen (Australian magpie).